The chain runs to 251 residues: tRNA pseudouridine synthase A (251 aa).

The active-site Nucleophile is Asp-54. Tyr-111 provides a ligand contact to substrate.

It belongs to the tRNA pseudouridine synthase TruA family. As to quaternary structure, homodimer.

The catalysed reaction is uridine(38/39/40) in tRNA = pseudouridine(38/39/40) in tRNA. In terms of biological role, formation of pseudouridine at positions 38, 39 and 40 in the anticodon stem and loop of transfer RNAs. The polypeptide is tRNA pseudouridine synthase A (Mycoplasma mycoides subsp. mycoides SC (strain CCUG 32753 / NCTC 10114 / PG1)).